An 89-amino-acid polypeptide reads, in one-letter code: Sec-independent protein translocase protein TatA (89 aa).

A helical transmembrane segment spans residues 1–21; it reads MGGISIWQLLIIAVIVVLLFG. The segment at 65 to 89 is disordered; the sequence is ADKQADTNQEQAKTEDAKRHDKEQV. The span at 76 to 89 shows a compositional bias: basic and acidic residues; sequence AKTEDAKRHDKEQV.

This sequence belongs to the TatA/E family. As to quaternary structure, the Tat system comprises two distinct complexes: a TatABC complex, containing multiple copies of TatA, TatB and TatC subunits, and a separate TatA complex, containing only TatA subunits. Substrates initially bind to the TatABC complex, which probably triggers association of the separate TatA complex to form the active translocon.

It localises to the cell inner membrane. In terms of biological role, part of the twin-arginine translocation (Tat) system that transports large folded proteins containing a characteristic twin-arginine motif in their signal peptide across membranes. TatA could form the protein-conducting channel of the Tat system. The sequence is that of Sec-independent protein translocase protein TatA from Shigella flexneri.